The primary structure comprises 95 residues: MARSIKKGPFVDTHVQKKIDNALEKNDKKVIKTWSRRSTILPETIGLTFAVHNGRKFVPVYITENMIGHKLGEFAPTRTFHGHAEKKAAAPAAKK.

This sequence belongs to the universal ribosomal protein uS19 family.

In terms of biological role, protein S19 forms a complex with S13 that binds strongly to the 16S ribosomal RNA. This Bdellovibrio bacteriovorus (strain ATCC 15356 / DSM 50701 / NCIMB 9529 / HD100) protein is Small ribosomal subunit protein uS19.